A 437-amino-acid polypeptide reads, in one-letter code: CMP-5'-(3-aminopropyl)phosphonate hydroxylase (437 aa).

The cofactor is FAD.

It catalyses the reaction CMP-5'-(3-aminopropyl)phosphonate + NADPH + O2 = CMP-5'-(N-hydroxy-3-aminopropyl)phosphonate + NADP(+) + H2O. The protein operates within antibiotic biosynthesis. In terms of biological role, hydroxylase involved in the biosynthesis of the phosphonate antibiotic FR-900098, a potent antimalarial agent that acts as an inhibitor of 1-deoxy-D-xylulose 5-phosphate reductoisomerase (DXR), the first enzyme in the nonmevalonate pathway for isoprenoid biosynthesis. Catalyzes the N-hydroxylation of CMP-5'-3-aminopropylphosphonate (CMP-5'-3APn) to CMP-5'-(N-hydroxy-3-aminopropyl)phosphonate (CMP-5'-H3APn). Cannot use CMP-5'-N-acetyl-3-aminopropylphosphonate (CMP-5'-Ac3APn) as a substrate. This Streptomyces rubellomurinus (strain ATCC 31215) protein is CMP-5'-(3-aminopropyl)phosphonate hydroxylase.